The sequence spans 392 residues: Acetyl-CoA acetyltransferase (392 aa).

The Acyl-thioester intermediate role is filled by Cys85. CoA is bound by residues Cys206, Ser207, Val209, and Lys332. The active-site Proton acceptor is the His336.

The protein belongs to the thiolase-like superfamily. Thiolase family. As to quaternary structure, interacts with HMG-CoA synthase (HMGCS) that catalyzes the second step in the pathway and with a DUF35 protein. The acetoacetyl-CoA thiolase/HMG-CoA synthase complex channels the intermediate via a fused CoA-binding site, which allows for efficient coupling of the endergonic thiolase reaction with the exergonic HMGCS reaction.

The catalysed reaction is 2 acetyl-CoA = acetoacetyl-CoA + CoA. It functions in the pathway metabolic intermediate biosynthesis; (R)-mevalonate biosynthesis; (R)-mevalonate from acetyl-CoA: step 1/3. Functionally, catalyzes the condensation of two acetyl-coA molecules into acetoacetyl-CoA. Functions in the mevalonate (MVA) pathway leading to isopentenyl diphosphate (IPP), a key precursor for the biosynthesis of isoprenoid compounds that are building blocks of archaeal membrane lipids. The protein is Acetyl-CoA acetyltransferase of Methanocaldococcus jannaschii (strain ATCC 43067 / DSM 2661 / JAL-1 / JCM 10045 / NBRC 100440) (Methanococcus jannaschii).